Consider the following 417-residue polypeptide: MFIKNKTISNYDADVYRMMKQEYQRQENHIELIASENYVSSCVMEAQGSQLTNKYAEGYPGKRYYGGCDYVDAIEKIAIKRAKKLFNANYANVQPHSGSQANYAVYSALLKPNDIVLGMSLSHGGHLTHGSSVNFSGKLYKFISYGLDISGDIDYPQIRKLAHRYKPKMIVGGFSAYSGICNWKLLREIADEINSYLFVDMAHISGLVAAGLYPNPLKYAHVVTSTTHKTLSGPRGGLILAKGDNVSLFKKLNSSVFPGCQGGPLMHVIAAKAIAFKEAMEPEFKDYQYQVIKNAQEMAKTFISRGYKVVSGKTFNHLLLLDLSNKNITGKRADILLHSANIIVNKNSIPNDLLSPFITSGIRIGTPAITRRGFTELESRQVSNWICDILDNFNNIEISAKVKQKVLNLCSLFPVYK.

(6S)-5,6,7,8-tetrahydrofolate contacts are provided by residues Leu-121 and 125–127 (GHL). The residue at position 229 (Lys-229) is an N6-(pyridoxal phosphate)lysine. 355 to 357 (SPF) is a (6S)-5,6,7,8-tetrahydrofolate binding site.

The protein belongs to the SHMT family. In terms of assembly, homodimer. Pyridoxal 5'-phosphate is required as a cofactor.

It is found in the cytoplasm. The catalysed reaction is (6R)-5,10-methylene-5,6,7,8-tetrahydrofolate + glycine + H2O = (6S)-5,6,7,8-tetrahydrofolate + L-serine. The protein operates within one-carbon metabolism; tetrahydrofolate interconversion. Its pathway is amino-acid biosynthesis; glycine biosynthesis; glycine from L-serine: step 1/1. Functionally, catalyzes the reversible interconversion of serine and glycine with tetrahydrofolate (THF) serving as the one-carbon carrier. This reaction serves as the major source of one-carbon groups required for the biosynthesis of purines, thymidylate, methionine, and other important biomolecules. Also exhibits THF-independent aldolase activity toward beta-hydroxyamino acids, producing glycine and aldehydes, via a retro-aldol mechanism. The polypeptide is Serine hydroxymethyltransferase (Buchnera aphidicola subsp. Baizongia pistaciae (strain Bp)).